Here is a 671-residue protein sequence, read N- to C-terminus: RNA polymerase sigma factor RpoD (671 aa).

Disordered stretches follow at residues 1–45 and 229–260; these read MKKK…SKIK and DDDE…VSEK. A compositionally biased stretch (basic and acidic residues) spans 251–260; the sequence is EERKKVVSEK. The interval 436 to 506 is sigma-70 factor domain-2; it reads MAKSNLRLVV…SRAIADQART (71 aa). Positions 460–463 match the Interaction with polymerase core subunit RpoC motif; sequence DLIQ. The tract at residues 515-591 is sigma-70 factor domain-3; that stretch reads DTINRINKVM…DKNIVSSIDH (77 aa). The interval 604–658 is sigma-70 factor domain-4; sequence VLDQLNEREKAVIRMRFGLLDDESDRTLEEIGKELNVTRERVRQIESSAIKKLRS. The segment at residues 631–650 is a DNA-binding region (H-T-H motif); that stretch reads LEEIGKELNVTRERVRQIES.

Belongs to the sigma-70 factor family. RpoD/SigA subfamily. As to quaternary structure, interacts transiently with the RNA polymerase catalytic core.

It localises to the cytoplasm. Sigma factors are initiation factors that promote the attachment of RNA polymerase to specific initiation sites and are then released. This sigma factor is the primary sigma factor during exponential growth. This is RNA polymerase sigma factor RpoD from Helicobacter pylori (strain ATCC 700392 / 26695) (Campylobacter pylori).